We begin with the raw amino-acid sequence, 206 residues long: Small ribosomal subunit protein uS4 (206 aa).

Residues 96-156 enclose the S4 RNA-binding domain; it reads GRLDNVVYRM…EKSKKQARIK (61 aa).

This sequence belongs to the universal ribosomal protein uS4 family. Part of the 30S ribosomal subunit. Contacts protein S5. The interaction surface between S4 and S5 is involved in control of translational fidelity.

Its function is as follows. One of the primary rRNA binding proteins, it binds directly to 16S rRNA where it nucleates assembly of the body of the 30S subunit. Functionally, with S5 and S12 plays an important role in translational accuracy. This is Small ribosomal subunit protein uS4 from Histophilus somni (strain 2336) (Haemophilus somnus).